A 139-amino-acid chain; its full sequence is uncharacterized protein (139 aa).

This is an uncharacterized protein from Homo sapiens (Human).